Reading from the N-terminus, the 196-residue chain is Probable histone chaperone ASF1A (196 aa).

Positions 146-157 (VTKFPIDFHPEE) are enriched in basic and acidic residues. The segment at 146–196 (VTKFPIDFHPEEEQTAATAAPPEQSDEQQPNVNGEAQVLPDQSVEPKPEES) is disordered.

The protein belongs to the ASF1 family. Interacts with histone H3 and histone H4. Component of the HIRA complex made of UBN1, UBN2, ASF1A, CABIN1 and HIRA. Interacts with HIRA. As to expression, expressed in leaves and flower buds.

The protein localises to the nucleus. It is found in the nucleolus. In terms of biological role, histone chaperone that facilitates histone deposition and histone exchange and removal during nucleosome assembly and disassembly. While encoded by a region of the Arabidopsis thaliana genome that is homologous to the Brassica S-locus for self incompatibility, this protein may not play the same role in Arabidopsis thaliana. This chain is Probable histone chaperone ASF1A (ASF1A), found in Arabidopsis thaliana (Mouse-ear cress).